The primary structure comprises 140 residues: Protein NrdI (140 aa).

Belongs to the NrdI family.

Its function is as follows. Probably involved in ribonucleotide reductase function. The sequence is that of Protein NrdI from Photorhabdus laumondii subsp. laumondii (strain DSM 15139 / CIP 105565 / TT01) (Photorhabdus luminescens subsp. laumondii).